Reading from the N-terminus, the 295-residue chain is Probable aspartoacylase (295 aa).

Residues H13 and E16 each contribute to the Zn(2+) site. Substrate is bound by residues R54 and 61 to 62 (NR). H100 lines the Zn(2+) pocket. Residues E158 and Y268 each coordinate substrate.

This sequence belongs to the AspA/AstE family. Aspartoacylase subfamily. Zn(2+) is required as a cofactor.

It catalyses the reaction an N-acyl-L-aspartate + H2O = a carboxylate + L-aspartate. The protein is Probable aspartoacylase of Prochlorococcus marinus subsp. pastoris (strain CCMP1986 / NIES-2087 / MED4).